Consider the following 38-residue polypeptide: MKVRASVKKRSEDDIIVRRKGRIYVINKKNRRHNQRQG.

The protein belongs to the bacterial ribosomal protein bL36 family.

This chain is Large ribosomal subunit protein bL36, found in Aster yellows witches'-broom phytoplasma (strain AYWB).